An 898-amino-acid chain; its full sequence is Chloride channel protein 2 (898 aa).

Ala2 carries the post-translational modification N-acetylalanine. Over 2–87 the chain is Cytoplasmic; it reads AAAAAEEGME…RCHKFLVSRV (86 aa). Residues 16–34 are essential for channel gating by both voltage and cell volume; sequence QYEQTLMYGRYTQDLGAFA. Thr20 is modified (phosphothreonine). Positions 36-49 are modulates channel gating by both voltage and cell volume; it reads EEAARIRLGGPEPW. Helical transmembrane passes span 88-121 and 130-155; these read GEDWIFLVLLGLLMALVSWVMDYAIAACLQAQQW and ILLQYLAWVTYPVVLITFSAGFTQIL. The Selectivity filter part_1 signature appears at 161-165; sequence GSGIP. Residue Ser162 coordinates chloride. Positions 164-171 form an intramembrane region, helical; that stretch reads IPEMKTIL. 2 helical membrane passes run 180 to 198 and 205 to 223; these read LTLKTFIAKVIGLTCALGS and EGPFVHIASMCAALLSKFL. The short motif at 203–207 is the Selectivity filter part_2 element; sequence GKEGP. 2 intramembrane regions (helical) span residues 239–251 and 255–263; these read MLAAACAVGVGCC and PIGGVLFSI. 5 consecutive transmembrane segments (helical) span residues 275 to 295, 321 to 349, 358 to 377, 429 to 449, and 457 to 480; these read YWRGFFAATFSAFIFRVLAVW, LPAFAVIGIASGFGGALFVYLNRKIVQVM, FLMRKRLLFPALVTLLISTL, ANVFLTLVIFILMKFWMSALA, and GAFMPVFVIGAAFGRLVGESMAAW. The short motif at 457–461 is the Selectivity filter part_3 element; it reads GAFMP. Phe459 contacts chloride. An intramembrane region (helical) is located at residues 497 to 511; sequence GGYAVVGAAALAGAV. The note=Loop between two helices intramembrane region spans 512 to 513; that stretch reads TH. Residues 514–525 constitute an intramembrane region (helical); the sequence is TVSTAVIVFELT. Residues 526–530 constitute an intramembrane region (note=Loop between two helices); the sequence is GQIAH. A helical transmembrane segment spans residues 531-548; the sequence is ILPVMIAVILANAVAQSL. Over 549–898 the chain is Cytoplasmic; sequence QPSLYDSIIR…SPSDSDDKCQ (350 aa). Position 553 (Tyr553) interacts with chloride. A CBS 1 domain is found at 584-642; it reads MVRDVPHVALSCTFRDLRLALHRTKGRMLALVESPESMILLGSIERSQVVALLGAQLSP. Disordered regions lie at residues 643–672 and 686–717; these read ARRRQHMQERRATQTSPLSDQEGPPTPEAS and AARGETHKPLKPALKRGPSVTRNLGESPTGSA. Polar residues predominate over residues 705-717; the sequence is VTRNLGESPTGSA. A phosphoserine mark is found at Ser712 and Ser758. In terms of domain architecture, CBS 2 spans 790 to 850; it reads IDPAPFQLVE…GSVTAQGVKV (61 aa). The short motif at 812-813 is the Basolateral membrane sorting element; the sequence is LL. Residues 856 to 898 form a disordered region; that stretch reads SFRDSATSSSDTETTEVHALWGPHSRHGLPREGSPSDSDDKCQ.

Belongs to the chloride channel (TC 2.A.49) family. ClC-2/CLCN2 subfamily. Homodimer. Interacts with auxiliary subunit HEPACAM. Phosphorylated. Activated by dephosphorylation. Ubiquitously expressed. Moderately expressed in aortic and coronary vascular smooth muscle cells and expressed at a low level in aortic endothelial cells. Expressed in the adrenal gland, predominantly in the zona glomerulosa. Expressed in white mater perivascular astrocytes and ependymal cells (at protein level).

Its subcellular location is the cell membrane. The protein resides in the basolateral cell membrane. It localises to the cell projection. The protein localises to the dendritic spine membrane. It is found in the axon. It carries out the reaction chloride(in) = chloride(out). It catalyses the reaction thiocyanate(in) = thiocyanate(out). The enzyme catalyses bromide(in) = bromide(out). The catalysed reaction is nitrate(in) = nitrate(out). It carries out the reaction iodide(out) = iodide(in). Common gate kinetics are down-regulated by intracellular ATP. Inhibited by AK-42, a derivative of meclofenamate. Inhibited by Cd(2+). Inhibited by Zn(2+) and PKC activation. Inhibited at acidic pH. CCLN2:HEPACAM channel conductance is up-regulated upon hypo-osmolarity. Its function is as follows. Voltage-gated and osmosensitive chloride channel. Forms a homodimeric channel where each subunit has its own ion conduction pathway. Conducts double-barreled currents controlled by two types of gates, two fast glutamate gates that control each subunit independently and a slow common gate that opens and shuts off both subunits simultaneously. Displays inward rectification currents activated upon membrane hyperpolarization and extracellular hypotonicity. Contributes to chloride conductance involved in neuron excitability. In hippocampal neurons, generates a significant part of resting membrane conductance and provides an additional chloride efflux pathway to prevent chloride accumulation in dendrites upon GABA receptor activation. In glia, associates with the auxiliary subunit HEPACAM/GlialCAM at astrocytic processes and myelinated fiber tracts where it may regulate transcellular chloride flux buffering extracellular chloride and potassium concentrations. Regulates aldosterone production in adrenal glands. The opening of CLCN2 channels at hyperpolarized membrane potentials in the glomerulosa causes cell membrane depolarization, activation of voltage-gated calcium channels and increased expression of aldosterone synthase, the rate-limiting enzyme for aldosterone biosynthesis. Contributes to chloride conductance in retinal pigment epithelium involved in phagocytosis of shed photoreceptor outer segments and photoreceptor renewal. Conducts chloride currents at the basolateral membrane of epithelial cells with a role in chloride reabsorption rather than secretion. Permeable to small monovalent anions with chloride &gt; thiocyanate &gt; bromide &gt; nitrate &gt; iodide ion selectivity. The chain is Chloride channel protein 2 from Homo sapiens (Human).